Reading from the N-terminus, the 307-residue chain is MNSTTCNSTLTWPASVNNFFIIYSALLLVLGLLLNSVALWVFCYRMHQWTETRIYMTNLAVADLCLLCSLPFVLYSLKYSSSDTPVCQLSQGIYLANRYMSISLVTAIAVDRYVAVRHPLRARELRSPRQAAAVCVALWVIVVTSLVVRWRLGMQEGGFCFSSQTRRNFSTTAFSLLGFYLPLAIVVFCSLQVVTVLSRRPAADVGQAEATQKATHMVWANLAVFVICFLPLHVVLTVQVSLNLNTCAARDTFSRALSITGKLSDTNCCLDAICYYYMAREFQEASKPATSSNTPHKSQDSQILSLT.

Residues 1 to 18 are Extracellular-facing; that stretch reads MNSTTCNSTLTWPASVNN. N2 and N7 each carry an N-linked (GlcNAc...) asparagine glycan. The chain crosses the membrane as a helical span at residues 19 to 39; the sequence is FFIIYSALLLVLGLLLNSVAL. The Cytoplasmic segment spans residues 40-53; the sequence is WVFCYRMHQWTETR. Residues 54–74 traverse the membrane as a helical segment; that stretch reads IYMTNLAVADLCLLCSLPFVL. The Extracellular segment spans residues 75–88; sequence YSLKYSSSDTPVCQ. C87 and C160 are disulfide-bonded. A helical membrane pass occupies residues 89–110; that stretch reads LSQGIYLANRYMSISLVTAIAV. Residues 111–129 lie on the Cytoplasmic side of the membrane; that stretch reads DRYVAVRHPLRARELRSPR. Residues 130–150 traverse the membrane as a helical segment; it reads QAAAVCVALWVIVVTSLVVRW. Over 151-176 the chain is Extracellular; the sequence is RLGMQEGGFCFSSQTRRNFSTTAFSL. A helical transmembrane segment spans residues 177 to 197; that stretch reads LGFYLPLAIVVFCSLQVVTVL. The Cytoplasmic segment spans residues 198-217; it reads SRRPAADVGQAEATQKATHM. A helical transmembrane segment spans residues 218 to 238; sequence VWANLAVFVICFLPLHVVLTV. The Extracellular segment spans residues 239 to 257; the sequence is QVSLNLNTCAARDTFSRAL. The chain crosses the membrane as a helical span at residues 258 to 278; that stretch reads SITGKLSDTNCCLDAICYYYM. Over 279-307 the chain is Cytoplasmic; it reads AREFQEASKPATSSNTPHKSQDSQILSLT. Residues S286, S292, S298, and S301 each carry the phosphoserine modification. The disordered stretch occupies residues 288-307; that stretch reads PATSSNTPHKSQDSQILSLT.

The protein belongs to the G-protein coupled receptor 1 family. In terms of processing, multiply phosphorylated in clusters of serines and threonines in the C-terminal tail. Phosphorylation of Ser-298 and Ser-301 is mediated by GRK5 and/or GRK6. As to expression, predominantly expressed in immune and gastrointestinal tissues. Strongly GPR35 expressed in colonic macrophages.

Its subcellular location is the cell membrane. G-protein coupled receptor that binds to several ligands including the tryptophan metabolite kynurenic acid (KYNA), lysophosphatidic acid (LPA) or 5-hydroxyindoleacetic acid (5-HIAA) with high affinity, leading to rapid and transient activation of numerous intracellular signaling pathways. Plays a role in neutrophil recruitment to sites of inflammation and bacterial clearance through the major serotonin metabolite 5-HIAA that acts as a physiological ligand. Stimulates lipid metabolism, thermogenic, and anti-inflammatory gene expression in adipose tissue once activated by kynurenic acid. In macrophages, activation by lysophosphatidic acid promotes GPR35-induced signaling with a distinct transcriptional profile characterized by TNF production associated with ERK and NF-kappa-B activation. In turn, induces chemotaxis of macrophages. This is G-protein coupled receptor 35 (Gpr35) from Mus musculus (Mouse).